We begin with the raw amino-acid sequence, 729 residues long: Kinesin-like protein KAR3 (729 aa).

The tract at residues 1–48 is disordered; it reads MESLPRTPTKGRSTQHLSTPSPKNDILAMNGHKRRNTTTPPPKHTLLK. A globular region spans residues 1–109; it reads MESLPRTPTK…ENVNELNRTQ (109 aa). The span at 10-22 shows a compositional bias: polar residues; sequence KGRSTQHLSTPSP. Residues 110–357 are a coiled coil; the sequence is AILFEKKATL…LEEYIKDTEL (248 aa). Residues asparagine 386, arginine 388, arginine 392, glutamate 454, glycine 477, serine 478, glycine 479, lysine 480, threonine 481, phenylalanine 482, glutamate 554, lysine 579, and threonine 694 each contribute to the ATP site. The Kinesin motor domain occupies 386–723; that stretch reads NIRVYCRIRP…LRFASKVNST (338 aa).

Belongs to the TRAFAC class myosin-kinesin ATPase superfamily. Kinesin family. NCD subfamily. Interacts with CIK1; the interaction is direct. Interacts with VIK1; the interaction is direct.

It is found in the cytoplasm. The protein localises to the cytoskeleton. Its subcellular location is the microtubule organizing center. It localises to the spindle pole body. The protein resides in the nucleus. It is found in the chromosome. The protein localises to the spindle. It carries out the reaction ATP + H2O = ADP + phosphate + H(+). The catalysed reaction is ATP + H2O + a kinesin associated with a microtubule at position (n) = ADP + phosphate + a kinesin associated with a microtubule at position (n-1, toward the minus end).. Minus end-directed microtubule (MT) motor involved in spindle midzone assembly, poleward transport of newly captured kinetochores along the lateral side of MTs, karyogamy (nuclear fusion) during mating, and with an essential function in meiosis I. Functions together with the accessory proteins CIK1 or VIK1. Drives the poleward transport of newly captured kinetochores along the lateral side of MTs, both during S-phase and during M-phase. To contribute to spindle midzone assembly during mitotic metaphase, the nuclear KAR3-CIK1 motor cross-links anti-parallel microtubules to align them on the spindle axis; as the motor travels polewards splayed microtubules are pulled into alignment. During the karyogamy (nuclear fusion) step of mating, KAR3-CIK1 cross-links antiparallel cytoplasmic microtubules emanating from the spindle pole bodies of mating partners; the motor activity of KAR3 creates the force that pulls the nuclei together by sliding cross-linked microtubules past one another. KAR3-CIK1 promotes microtubule shortening predominantly from the microtubule plus-end. Together with cytoplasmic VIK1, may act to stabilize microtubules. Requires accessory protein VIK1 for spindle pole body localization and to allow the CIN8 and KIP1 motors to generate outwardly directed spindle forces. Essential during meiosis I. The ATPase activity is stimulated by microtubule-binding. The chain is Kinesin-like protein KAR3 (KAR3) from Saccharomyces cerevisiae (strain ATCC 204508 / S288c) (Baker's yeast).